The sequence spans 503 residues: ESX-5 secretion system protein EccD5 (503 aa).

The next 11 membrane-spanning stretches (helical) occupy residues 137-157 (IVAVQVGASMVATGVVLATGV), 169-189 (LTTIYTAVIGVLVLAVAMLLL), 200-220 (VADIMLMSAIMPVTVAAAAAP), 224-244 (VGSPQAVLGFGVLTVAAALAL), 250-270 (RLGIYTTIVIIGALTMLAALA), 272-292 (MVAATSAVTLLSSLLLICVVA), 359-379 (FLSGLLTGLGVMVVVCMTSLC), 382-402 (HTGQRWLPLILAGFTSGFLLL), 413-433 (SITLAGTAVIIAAAVCVRYAL), 439-459 (LAVSIVAAILVLLPAAGMAAA), and 480-500 (YLCLMPIFPLALWLMNVYAAI).

This sequence belongs to the EccD/Snm4 family. As to quaternary structure, part of the ESX-5 / type VII secretion system (T7SS), which is composed of cytosolic and membrane components. The ESX-5 membrane complex is composed of EccB5, EccC5, EccD5 and EccE5.

The protein localises to the cell inner membrane. Part of the ESX-5 specialized secretion system, which is responsible for the secretion of EsxN and a number of PE_PGRS and PPE proteins, including PPE41. In Mycobacterium tuberculosis (strain CDC 1551 / Oshkosh), this protein is ESX-5 secretion system protein EccD5.